The chain runs to 418 residues: 3-deoxy-D-manno-octulosonic acid transferase (418 aa).

A helical; Signal-anchor membrane pass occupies residues 7–27 (FLSFLLLPIYFVIIFIRLLIG). E60 acts as the Proton acceptor in catalysis. Residues 264–265 (PR), 305–307 (FGE), and 330–333 (NILE) contribute to the CMP site.

Belongs to the glycosyltransferase group 1 family. Glycosyltransferase 30 subfamily.

The protein resides in the cell inner membrane. It carries out the reaction lipid IVA (E. coli) + CMP-3-deoxy-beta-D-manno-octulosonate = alpha-Kdo-(2-&gt;6)-lipid IVA (E. coli) + CMP + H(+). It participates in bacterial outer membrane biogenesis; LPS core biosynthesis. Its function is as follows. Involved in lipopolysaccharide (LPS) biosynthesis. Catalyzes the transfer of 3-deoxy-D-manno-octulosonate (Kdo) residue(s) from CMP-Kdo to lipid IV(A), the tetraacyldisaccharide-1,4'-bisphosphate precursor of lipid A. The protein is 3-deoxy-D-manno-octulosonic acid transferase (waaA) of Rickettsia bellii (strain RML369-C).